Here is a 488-residue protein sequence, read N- to C-terminus: Mannosylglycerate hydrolase MGH2 (488 aa).

Residues tyrosine 94, 98 to 101 (WNWD), tyrosine 146, glutamine 167, and glycine 227 each bind substrate. Catalysis depends on aspartate 229, which acts as the Proton donor. Substrate is bound by residues arginine 262 and 415–416 (YW). The active-site Proton acceptor is glutamate 459.

Belongs to the glycosyl hydrolase 63 family.

It catalyses the reaction (2R)-2-O-(alpha-D-mannosyl)-glycerate + H2O = D-mannose + (R)-glycerate. The enzyme catalyses (2R)-2-O-(alpha-D-glucopyranosyl)-glycerate + H2O = (R)-glycerate + D-glucose. Activity is not dependent on divalent cations, but it is enhanced by Mn(2+). Functionally, catalyzes the hydrolysis of alpha-D-mannosyl-glycerate (MG) to D-glycerate and D-mannose. Can also hydrolyze alpha-D-glucopyranosyl-glycerate (GG)with lower efficiency. The chain is Mannosylglycerate hydrolase MGH2 from Selaginella moellendorffii (Spikemoss).